The primary structure comprises 161 residues: MEHGHATNRVDEYGNPVAGHGVGTGMGAHGGVGTGAAAGGHFQPTREEHKAGGILQRSGSSSSSSSEDDGMGGRRKKGLKDKIKEKLPGGHGDQQQTGGTYGQHGHTGMTGTGEHGATATGGTYGQQGHTGMTGTGAHGTDGTGEKKGIMDKIKEKLPGQH.

Residues 1 to 12 (MEHGHATNRVDE) are compositionally biased toward basic and acidic residues. Positions 1–161 (MEHGHATNRV…KIKEKLPGQH (161 aa)) are disordered. Over residues 20 to 38 (HGVGTGMGAHGGVGTGAAA) the composition is skewed to gly residues. Low complexity-rich tracts occupy residues 93–107 (DQQQ…HGHT) and 115–130 (HGAT…QGHT). Repeat copies occupy residues 101–123 (YGQH…TGGT) and 124–144 (YGQQ…DGTG). The interval 101–144 (YGQHGHTGMTGTGEHGATATGGTYGQQGHTGMTGTGAHGTDGTG) is 2 X approximate tandem repeats. The span at 131 to 142 (GMTGTGAHGTDG) shows a compositional bias: gly residues. A compositionally biased stretch (basic and acidic residues) spans 143-161 (TGEKKGIMDKIKEKLPGQH).

This sequence belongs to the plant dehydrin family.

In Hordeum vulgare (Barley), this protein is Dehydrin DHN3 (DHN3).